Reading from the N-terminus, the 579-residue chain is 3-hydroxy-3-methylglutaryl-coenzyme A reductase (579 aa).

The tract at residues 1 to 22 is disordered; it reads MEVRGGVGQGSAARHPPAPEPS. Transmembrane regions (helical) follow at residues 36–56 and 80–100; these read LPIR…LAYL and AIFG…IAFV. A linker region spans residues 101-153; sequence QSIVSSGDDDEDFLVGSGSSGSAAAPSRQHAQAPAPCELLGSPAAAPEKMPED. Positions 154-579 are catalytic; sequence DEEIVASVVA…EKTRQREVDV (426 aa). Catalysis depends on E247, which acts as the Charge relay system. Residue N311 is glycosylated (N-linked (GlcNAc...) asparagine). Active-site charge relay system residues include K379 and D455. Residues 524–544 form a helical membrane-spanning segment; the sequence is LLATVVAGGVLAGELSLLSAL. The active-site Proton donor is the H553. A disordered region spans residues 555-579; that stretch reads KYNRSSKDVSSTTATEKTRQREVDV. N-linked (GlcNAc...) asparagine glycosylation is present at N557. Residues 570–579 show a composition bias toward basic and acidic residues; it reads EKTRQREVDV.

It belongs to the HMG-CoA reductase family.

The protein resides in the endoplasmic reticulum membrane. It carries out the reaction (R)-mevalonate + 2 NADP(+) + CoA = (3S)-3-hydroxy-3-methylglutaryl-CoA + 2 NADPH + 2 H(+). It participates in metabolic intermediate biosynthesis; (R)-mevalonate biosynthesis; (R)-mevalonate from acetyl-CoA: step 3/3. Catalyzes the synthesis of mevalonate. The specific precursor of all isoprenoid compounds present in plants. This Zea mays (Maize) protein is 3-hydroxy-3-methylglutaryl-coenzyme A reductase (HMGR).